A 121-amino-acid polypeptide reads, in one-letter code: LSM complex subunit lsm4 (121 aa).

In terms of domain architecture, Sm spans 2–75; that stretch reads LPLTLLNATQ…IKYLRIQDEV (74 aa). The segment at 82–121 is disordered; the sequence is QQAQQRENRGSRFRGRGQRGRGNYGHTAPNRRGRGRGGHM. Over residues 110 to 121 the composition is skewed to basic residues; it reads PNRRGRGRGGHM.

It belongs to the snRNP Sm proteins family. In terms of assembly, component of the heptameric LSM1-LSM7 complex that forms a seven-membered ring structure with a donut shape. The LSm subunits are arranged in the order lsm1, lsm2, lsm3, lsm6, lsm5, lsm7 and lsm4. Component of the heptameric LSM2-LSM8 complex that forms a seven-membered ring structure with a donut shape. The LSm subunits are arranged in the order lsm8, lsm2, lsm3, lsm6, lsm5, lsm7 and lsm4.

Its subcellular location is the nucleus. It is found in the cytoplasm. In terms of biological role, component of LSm protein complexes, which are involved in RNA processing and may function in a chaperone-like manner. Component of the cytoplasmic LSM1-LSM7 complex which is involved in mRNA degradation by activating the decapping step. The LSM1-LSM7 complex loads onto the 3'-end of single stranded RNA. Component of the nuclear LSM2-LSM8 complex, which is involved in spliceosome assembly. The LSM2-LSM8 complex plays a role in the biogenesis of the spliceosomal U4/U6-U5 tri-snRNP complex by accelerating prp24-mediated annealing of U4/U6 di-snRNA. The LSM2-LSM8 complex binds U6 snRNA terminating with a cyclic 2',3' phosphate group; RNA with an unmodified 3' hydroxyl or non-cyclic 3' phosphate is bound less tightly. In Schizosaccharomyces pombe (strain 972 / ATCC 24843) (Fission yeast), this protein is LSM complex subunit lsm4 (lsm4).